A 459-amino-acid chain; its full sequence is Flavin-containing monooxygenase FMO GS-OX5 (459 aa).

An FAD-binding site is contributed by 17–22 (GAGAAG). NADP(+) is bound at residue 212 to 217 (GNFASG).

This sequence belongs to the FMO family.

It carries out the reaction a (Z)-omega-(methylsulfanyl)-N-sulfo-alkylhydroximate S-glucoside + NADPH + O2 + H(+) = a (Z)-omega-(methylsulfinyl)-alkyl-glucosinolate + NADP(+) + H2O. Its function is as follows. Catalyzes the conversion of methylthioalkyl glucosinolates into methylsulfinylalkyl glucosinolates. Specific for 8-methylthiooctyl (8-MTO) glucosinolates. This chain is Flavin-containing monooxygenase FMO GS-OX5 (FMOGS-OX5), found in Arabidopsis thaliana (Mouse-ear cress).